The chain runs to 598 residues: UvrABC system protein C (598 aa).

One can recognise a GIY-YIG domain in the interval 14-91; the sequence is DQPGCYLMKD…IHKNNPKYNI (78 aa). In terms of domain architecture, UVR spans 196–231; the sequence is TEIQDRLQEKMAYAAAHMEFEKAAEFRDQIKAIETV.

This sequence belongs to the UvrC family. Interacts with UvrB in an incision complex.

The protein localises to the cytoplasm. Its function is as follows. The UvrABC repair system catalyzes the recognition and processing of DNA lesions. UvrC both incises the 5' and 3' sides of the lesion. The N-terminal half is responsible for the 3' incision and the C-terminal half is responsible for the 5' incision. This Enterococcus faecalis (strain ATCC 700802 / V583) protein is UvrABC system protein C.